The primary structure comprises 121 residues: Ribonuclease P protein component (121 aa).

The protein belongs to the RnpA family. As to quaternary structure, consists of a catalytic RNA component (M1 or rnpB) and a protein subunit.

It catalyses the reaction Endonucleolytic cleavage of RNA, removing 5'-extranucleotides from tRNA precursor.. Functionally, RNaseP catalyzes the removal of the 5'-leader sequence from pre-tRNA to produce the mature 5'-terminus. It can also cleave other RNA substrates such as 4.5S RNA. The protein component plays an auxiliary but essential role in vivo by binding to the 5'-leader sequence and broadening the substrate specificity of the ribozyme. The protein is Ribonuclease P protein component of Rickettsia prowazekii (strain Madrid E).